Reading from the N-terminus, the 595-residue chain is Arginine--tRNA ligase (595 aa).

A 'HIGH' region motif is present at residues 132 to 142; sequence ANPTGPLHVGH.

The protein belongs to the class-I aminoacyl-tRNA synthetase family. As to quaternary structure, monomer.

The protein localises to the cytoplasm. The enzyme catalyses tRNA(Arg) + L-arginine + ATP = L-arginyl-tRNA(Arg) + AMP + diphosphate. This Cupriavidus pinatubonensis (strain JMP 134 / LMG 1197) (Cupriavidus necator (strain JMP 134)) protein is Arginine--tRNA ligase.